The chain runs to 518 residues: Putative BTB/POZ domain and WD-repeat protein R731 (518 aa).

The BTB domain occupies 22–92 (TDCQLHLTDS…FYGFPLEEPN (71 aa)). The interval 224–246 (NHEESSDDEVNDDEDTDNEDTDD) is disordered. Residues 228 to 246 (SSDDEVNDDEDTDNEDTDD) are compositionally biased toward acidic residues. 2 WD repeats span residues 391–430 (NHSTTINHILYSPKSKYFIFCDENSIIYVYSTKDNYSLIK) and 437–475 (FLKFGVKDFEFMTSKIIVAIDIKGKICIWNIETEQIIQN).

Belongs to the mimivirus BTB/WD family.

The polypeptide is Putative BTB/POZ domain and WD-repeat protein R731 (Acanthamoeba polyphaga (Amoeba)).